Consider the following 430-residue polypeptide: UPF0597 protein BDI_1130 (430 aa).

Belongs to the UPF0597 family.

This Parabacteroides distasonis (strain ATCC 8503 / DSM 20701 / CIP 104284 / JCM 5825 / NCTC 11152) protein is UPF0597 protein BDI_1130.